Here is a 549-residue protein sequence, read N- to C-terminus: Cation/acetate symporter ActP (549 aa).

13 helical membrane passes run W33–A53, L77–F97, G103–E123, I148–G168, I183–A203, W206–V226, I262–L282, G303–V323, L355–L375, V404–E424, I428–L448, G464–V484, and I493–F513.

This sequence belongs to the sodium:solute symporter (SSF) (TC 2.A.21) family.

It is found in the cell inner membrane. In terms of biological role, transports acetate. This chain is Cation/acetate symporter ActP, found in Salmonella gallinarum (strain 287/91 / NCTC 13346).